A 301-amino-acid chain; its full sequence is uncharacterized protein (301 aa).

3 residues coordinate a divalent metal cation: Glu-146, Glu-148, and Asp-177.

The protein belongs to the FAH family.

This is an uncharacterized protein from Staphylococcus haemolyticus (strain JCSC1435).